The following is a 1052-amino-acid chain: SE-cephalotoxin (1052 aa).

An N-terminal signal peptide occupies residues 1-21 (MMGTSRCVILLFALLLWAANA). Positions 22-29 (APPEIHTT) are excised as a propeptide. Asn41 carries an N-linked (GlcNAc...) asparagine glycan. The stretch at 130-194 (TGVNRKLDQI…DMNKRRLMAE (65 aa)) forms a coiled coil. Asn353 carries N-linked (GlcNAc...) asparagine glycosylation. One can recognise an EGF-like domain in the interval 460–497 (PGNPCNHGCNGHGECKVVPYTDQFQCFCHGNYEGKMCQ). Disulfide bonds link Cys464–Cys474, Cys468–Cys485, and Cys487–Cys496. 2 N-linked (GlcNAc...) asparagine glycosylation sites follow: Asn576 and Asn715. A Sushi domain is found at 709-769 (TSCPPLNVTH…QWSATPKCES (61 aa)). Disulfide bonds link Cys711/Cys752, Cys739/Cys767, Cys780/Cys814, Cys784/Cys820, Cys795/Cys804, Cys829/Cys847, and Cys841/Cys858. The TSP type-1 domain maps to 768–821 (ESSWSRWSKWSACASTCGNATQSRRRRCLGQSESEKCIGPSKQVRKCFVEDCCQ). Asn786 carries an N-linked (GlcNAc...) asparagine glycan. The 41-residue stretch at 819–859 (CCQEKYGKFKCDNNKCISLSRVCDGNDDCRNAEDESKSRCK) folds into the LDL-receptor class A domain.

In terms of assembly, monomer. As to expression, expressed by the salivary gland.

The protein resides in the secreted. This Acanthosepion esculentum (Golden cuttlefish) protein is SE-cephalotoxin.